Consider the following 85-residue polypeptide: Follicular dendritic cell secreted peptide (85 aa).

Residues 1–17 form the signal peptide; sequence MKKVLLLITAILAVAVG. The segment at 75 to 83 is O-glycosylated at one site; the sequence is SAPTTPLPS.

In terms of processing, O-glycosylated with core 1 or possibly core 8 glycans. As to expression, abundantly expressed in tonsil, lymph node, and trachea; strong expression in prostate; lower expression in thyroid, stomach, and colon.

It localises to the secreted. Its function is as follows. Can bind to the surface of B-lymphoma cells, but not T-lymphoma cells, consistent with a function as a secreted mediator acting upon B-cells. In Homo sapiens (Human), this protein is Follicular dendritic cell secreted peptide (FDCSP).